The sequence spans 97 residues: ATP-dependent Clp protease adapter protein ClpS (97 aa).

It belongs to the ClpS family. In terms of assembly, binds to the N-terminal domain of the chaperone ClpA.

In terms of biological role, involved in the modulation of the specificity of the ClpAP-mediated ATP-dependent protein degradation. This Nostoc sp. (strain PCC 7120 / SAG 25.82 / UTEX 2576) protein is ATP-dependent Clp protease adapter protein ClpS.